The following is a 207-amino-acid chain: Uridine kinase (207 aa).

ATP is bound at residue 11–18 (GGSGSGKT).

This sequence belongs to the uridine kinase family.

The protein localises to the cytoplasm. It catalyses the reaction uridine + ATP = UMP + ADP + H(+). It carries out the reaction cytidine + ATP = CMP + ADP + H(+). The protein operates within pyrimidine metabolism; CTP biosynthesis via salvage pathway; CTP from cytidine: step 1/3. It functions in the pathway pyrimidine metabolism; UMP biosynthesis via salvage pathway; UMP from uridine: step 1/1. The sequence is that of Uridine kinase from Staphylococcus haemolyticus (strain JCSC1435).